A 316-amino-acid polypeptide reads, in one-letter code: Acetylglutamate kinase (316 aa).

Residues 76-77, Arg-98, and Asn-207 contribute to the substrate site; that span reads GG.

It belongs to the acetylglutamate kinase family. ArgB subfamily.

The protein resides in the cytoplasm. It catalyses the reaction N-acetyl-L-glutamate + ATP = N-acetyl-L-glutamyl 5-phosphate + ADP. The protein operates within amino-acid biosynthesis; L-arginine biosynthesis; N(2)-acetyl-L-ornithine from L-glutamate: step 2/4. In terms of biological role, catalyzes the ATP-dependent phosphorylation of N-acetyl-L-glutamate. In Paenarthrobacter aurescens (strain TC1), this protein is Acetylglutamate kinase.